The primary structure comprises 881 residues: Envelope glycoprotein gp160 (881 aa).

The first 19 residues, 1–19, serve as a signal peptide directing secretion; that stretch reads MGCLGNQLLIAILLLSVYG. The Extracellular segment spans residues 20–696; that stretch reads IYCTQYVTVF…ASWIKYIQYG (677 aa). Asparagine 37 is a glycosylation site (N-linked (GlcNAc...) asparagine; by host). An intrachain disulfide couples cysteine 44 to cysteine 57. 17 N-linked (GlcNAc...) asparagine; by host glycosylation sites follow: asparagine 70, asparagine 114, asparagine 148, asparagine 158, asparagine 186, asparagine 200, asparagine 204, asparagine 214, asparagine 246, asparagine 249, asparagine 280, asparagine 286, asparagine 297, asparagine 308, asparagine 318, asparagine 373, and asparagine 379. 5 disulfides stabilise this stretch: cysteine 101–cysteine 222, cysteine 108–cysteine 213, cysteine 113–cysteine 170, cysteine 235–cysteine 265, and cysteine 245–cysteine 257. Residues 113–169 form a V1 region; sequence CNKSETDRWGLTKSSTTITTAAPTSAPVSEKIDMVNETSSCIAQNNCTGLEQEQMIS. Positions 170-213 are V2; the sequence is CKFTMTGLKRDKTKEYNETWYSTDLVCEQGNSTDNESRCYMNHC. Residues 313-345 form a V3 region; it reads CRRPGNKTVLPVTIMSGLVFHSQPINDRPKQAW. A disulfide bond links cysteine 313 and cysteine 346. 2 disulfide bridges follow: cysteine 397–cysteine 461 and cysteine 404–cysteine 434. Residues 404–434 form a V4 region; the sequence is CKMNWFLNWVEDRDVTTQRPKERHRRNYVPC. Residues asparagine 462 and asparagine 478 are each glycosylated (N-linked (GlcNAc...) asparagine; by host). The segment at 477 to 484 is V5; it reads GNQTSITM. Residues 528 to 548 are fusion peptide; it reads GVFVLGFLGFLATAGSAMGAA. Positions 591–607 are immunosuppression; the sequence is LQTRVTAIEKYLKDQAQ. 3 N-linked (GlcNAc...) asparagine; by host glycosylation sites follow: asparagine 627, asparagine 636, and asparagine 652. Residues 636–668 are a coiled coil; the sequence is NDTWQEWERKVDFLEENITALLEEAQIQQEKNM. Residues 673-694 form an MPER; binding to GalCer region; it reads KLNSWDVFGNWFDLASWIKYIQ. A helical membrane pass occupies residues 697–717; sequence IYVVVGVILLRIVIYIVQMLA. Residues 718–881 lie on the Cytoplasmic side of the membrane; it reads KLRQGYRPVF…IRQGLELTLL (164 aa). A YXXV motif; contains endocytosis signal motif is present at residues 723-726; that stretch reads YRPV. Residues 737–761 form a disordered region; that stretch reads THTQQDPALPTREGKEGDGGEGGGN. Cysteine 789 is lipidated: S-palmitoyl cysteine; by host. The Di-leucine internalization motif signature appears at 880-881; sequence LL.

As to quaternary structure, the mature envelope protein (Env) consists of a homotrimer of non-covalently associated gp120-gp41 heterodimers. The resulting complex protrudes from the virus surface as a spike. Interacts with host CD4 and CCR5. Gp120 also interacts with the C-type lectins CD209/DC-SIGN and CLEC4M/DC-SIGNR (collectively referred to as DC-SIGN(R)). The mature envelope protein (Env) consists of a homotrimer of non-covalently associated gp120-gp41 heterodimers. The resulting complex protrudes from the virus surface as a spike. In terms of processing, specific enzymatic cleavages in vivo yield mature proteins. Envelope glycoproteins are synthesized as an inactive precursor that is heavily N-glycosylated and processed likely by host cell furin in the Golgi to yield the mature SU and TM proteins. The cleavage site between SU and TM requires the minimal sequence [KR]-X-[KR]-R. Post-translationally, palmitoylation of the transmembrane protein and of Env polyprotein (prior to its proteolytic cleavage) is essential for their association with host cell membrane lipid rafts. Palmitoylation is therefore required for envelope trafficking to classical lipid rafts, but not for viral replication.

It localises to the virion membrane. It is found in the host cell membrane. Its subcellular location is the host endosome membrane. Functionally, the surface protein gp120 (SU) attaches the virus to the host lymphoid cell by binding to the primary receptor CD4. This interaction induces a structural rearrangement creating a high affinity binding site for a chemokine coreceptor like CCR5. This peculiar 2 stage receptor-interaction strategy allows gp120 to maintain the highly conserved coreceptor-binding site in a cryptic conformation, protected from neutralizing antibodies. These changes are transmitted to the transmembrane protein gp41 and are thought to activate its fusogenic potential by unmasking its fusion peptide. Surface protein gp120 (SU) may target the virus to gut-associated lymphoid tissue (GALT) by binding host ITGA4/ITGB7 (alpha-4/beta-7 integrins), a complex that mediates T-cell migration to the GALT. Interaction between gp120 and ITGA4/ITGB7 would allow the virus to enter GALT early in the infection, infecting and killing most of GALT's resting CD4+ T-cells. This T-cell depletion is believed to be the major insult to the host immune system leading to AIDS. Its function is as follows. The surface protein gp120 is a ligand for CD209/DC-SIGN and CLEC4M/DC-SIGNR, which are respectively found on dendritic cells (DCs), and on endothelial cells of liver sinusoids and lymph node sinuses. These interactions allow capture of viral particles at mucosal surfaces by these cells and subsequent transmission to permissive cells. DCs are professional antigen presenting cells, critical for host immunity by inducing specific immune responses against a broad variety of pathogens. They act as sentinels in various tissues where they take up antigen, process it, and present it to T-cells following migration to lymphoid organs. SIV subverts the migration properties of dendritic cells to gain access to CD4+ T-cells in lymph nodes. Virus transmission to permissive T-cells occurs either in trans (without DCs infection, through viral capture and transmission), or in cis (following DCs productive infection, through the usual CD4-gp120 interaction), thereby inducing a robust infection. In trans infection, bound virions remain infectious over days and it is proposed that they are not degraded, but protected in non-lysosomal acidic organelles within the DCs close to the cell membrane thus contributing to the viral infectious potential during DCs' migration from the periphery to the lymphoid tissues. On arrival at lymphoid tissues, intact virions recycle back to DCs' cell surface allowing virus transmission to CD4+ T-cells. Virion capture also seems to lead to MHC-II-restricted viral antigen presentation, and probably to the activation of SIV-specific CD4+ cells. In terms of biological role, the transmembrane protein gp41 (TM) acts as a class I viral fusion protein. Under the current model, the protein has at least 3 conformational states: pre-fusion native state, pre-hairpin intermediate state, and post-fusion hairpin state. During fusion of viral and target intracellular membranes, the coiled coil regions (heptad repeats) assume a trimer-of-hairpins structure, positioning the fusion peptide in close proximity to the C-terminal region of the ectodomain. The formation of this structure appears to drive apposition and subsequent fusion of viral and target cell membranes. Complete fusion occurs in host cell endosomes. The virus undergoes clathrin-dependent internalization long before endosomal fusion, thus minimizing the surface exposure of conserved viral epitopes during fusion and reducing the efficacy of inhibitors targeting these epitopes. Membranes fusion leads to delivery of the nucleocapsid into the cytoplasm. Functionally, the envelope glycoprotein gp160 precursor down-modulates cell surface CD4 antigen by interacting with it in the endoplasmic reticulum and blocking its transport to the cell surface. The gp120-gp41 heterodimer allows rapid transcytosis of the virus through CD4 negative cells such as simple epithelial monolayers of the intestinal, rectal and endocervical epithelial barriers. Both gp120 and gp41 specifically recognize glycosphingolipids galactosyl-ceramide (GalCer) or 3' sulfo-galactosyl-ceramide (GalS) present in the lipid rafts structures of epithelial cells. Binding to these alternative receptors allows the rapid transcytosis of the virus through the epithelial cells. This transcytotic vesicle-mediated transport of virions from the apical side to the basolateral side of the epithelial cells does not involve infection of the cells themselves. The sequence is that of Envelope glycoprotein gp160 (env) from Cercopithecidae (Old World monkeys).